Reading from the N-terminus, the 2321-residue chain is Major viral transcription factor ICP4 homolog (2321 aa).

7 disordered regions span residues 19–183, 296–329, 350–438, 954–1180, 1360–1392, 1597–1841, and 2277–2321; these read GIFP…SPPL, ILHT…PAPI, EFIQ…PSLG, MDDD…SGLA, DNSS…APPH, LLND…PSCY, and QHEE…TFTD. A compositionally biased stretch (low complexity) spans 114-147; sequence SSNRPGGRNSSNGADESGESSSDRSPSYSPCDSY. Composition is skewed to pro residues over residues 302-329 and 355-367; these read PTPP…PAPI and QSPP…PSPP. A compositionally biased stretch (low complexity) spans 368–389; sequence AHSSSSCSPSHLAPSPLSSSPL. The span at 390–410 shows a compositional bias: pro residues; it reads SSPPQLSPAPVSPPSSPPPLS. Composition is skewed to polar residues over residues 424–433 and 1002–1011; these read SISSQPQSCP and PRLTTPSSGR. The segment covering 1031-1093 has biased composition (low complexity); the sequence is PETSPSNEHI…PSSPSSSRSP (63 aa). Over residues 1151–1161 the composition is skewed to basic residues; it reads GGGRPRGRPPK. 2 stretches are compositionally biased toward polar residues: residues 1169 to 1180 and 1371 to 1389; these read NDIQVTSSSGLA and SKPS…QTTA. Low complexity predominate over residues 1630–1644; that stretch reads STSSSQSASDKSPIK. Polar residues-rich tracts occupy residues 1720–1743 and 1801–1816; these read KAQT…QSSS and VGQT…HDIL. Positions 1817–1839 are enriched in low complexity; sequence SSSLPNRSCSSSPSPSKRPYHPS.

It belongs to the herpesviridae ICP4 family. A long stretch of serine residues may be a major site of phosphorylation.

It localises to the host nucleus. In terms of biological role, this IE protein is a multifunctional protein capable of migrating to the nucleus, binding to DNA, trans-activating other viral genes, and autoregulating its own synthesis. It is required for the switch from immediate-early to early mode of gene expression. The protein is Major viral transcription factor ICP4 homolog (MDV084) of Gallus gallus (Chicken).